The primary structure comprises 93 residues: Integration host factor subunit beta (93 aa).

The protein belongs to the bacterial histone-like protein family. Heterodimer of an alpha and a beta chain.

In terms of biological role, this protein is one of the two subunits of integration host factor, a specific DNA-binding protein that functions in genetic recombination as well as in transcriptional and translational control. The sequence is that of Integration host factor subunit beta from Idiomarina loihiensis (strain ATCC BAA-735 / DSM 15497 / L2-TR).